The chain runs to 344 residues: L-rhamnose-proton symporter (344 aa).

10 helical membrane passes run 4–24 (AITMGIFWHLIGAASAACFYA), 38–58 (WSVGGIVSWIILPWAISALLL), 68–88 (FSLSTLLPVFLFGAMWGIGNI), 101–121 (MGIGIAIGITLIVGTLMTPII), 137–157 (TLLGVLVALIGVGIVTRAGQL), 175–195 (LVLAVMCGIFSAGMSFAMNAA), 214–234 (LPSYVIIMGGGAIINLGFCFI), 259–279 (VLLSALGGLMWYLQFFFYAWG), 290–310 (ISWMLHMSFYVLCGGIVGLVL), and 323–343 (VLSLGCVVIIVAANIVGIGMA).

This sequence belongs to the L-rhamnose transporter (TC 2.A.7.6) family.

The protein resides in the cell inner membrane. It carries out the reaction L-rhamnopyranose(in) + H(+)(in) = L-rhamnopyranose(out) + H(+)(out). Uptake of L-rhamnose across the cytoplasmic membrane with the concomitant transport of protons into the cell (symport system). In Escherichia coli (strain 55989 / EAEC), this protein is L-rhamnose-proton symporter.